The following is a 375-amino-acid chain: MPKKDFYEVLGVEKGANDAEIKKAFRKLALKYHPDKNAGNKEAEERFKEINEAYQVLSDPQKRAQYDQFGTADFNGGGAGFSGFEDFDLGDIFESFFGGGFGGFGGSSRRRNGPQKGPDVQYSINLTFNEAVFGVEKEVSITKSETCETCTGTGAKPGTNSKTCPKCNGSGQIKVQRNTALGSFVSVNTCDMCGGKGTIISDPCSDCKGKGTVRKQKKIKVNIPAGVDTGNVIPIRGQGEAGVNGGPPGDLYISVRVMPDPFFKRRGDDIYIDQHISFAKASLGTELKVKTIDGEVKYDIPSGTQPGTVFRLKGKGVPHVNGRGRGDQYVNIIVDIPKSLNQKQKEALFAYMEASGEIQSSEKEGFFDKIKKNFK.

The region spanning 5 to 70 (DFYEVLGVEK…QKRAQYDQFG (66 aa)) is the J domain. The CR-type zinc-finger motif lies at 134-216 (GVEKEVSITK…CKGKGTVRKQ (83 aa)). Residues C147, C150, C164, C167, C190, C193, C204, and C207 each coordinate Zn(2+). CXXCXGXG motif repeat units lie at residues 147-154 (CETCTGTG), 164-171 (CPKCNGSG), 190-197 (CDMCGGKG), and 204-211 (CSDCKGKG).

This sequence belongs to the DnaJ family. In terms of assembly, homodimer. Requires Zn(2+) as cofactor.

The protein localises to the cytoplasm. Its function is as follows. Participates actively in the response to hyperosmotic and heat shock by preventing the aggregation of stress-denatured proteins and by disaggregating proteins, also in an autonomous, DnaK-independent fashion. Unfolded proteins bind initially to DnaJ; upon interaction with the DnaJ-bound protein, DnaK hydrolyzes its bound ATP, resulting in the formation of a stable complex. GrpE releases ADP from DnaK; ATP binding to DnaK triggers the release of the substrate protein, thus completing the reaction cycle. Several rounds of ATP-dependent interactions between DnaJ, DnaK and GrpE are required for fully efficient folding. Also involved, together with DnaK and GrpE, in the DNA replication of plasmids through activation of initiation proteins. The chain is Chaperone protein DnaJ from Clostridium tetani (strain Massachusetts / E88).